We begin with the raw amino-acid sequence, 272 residues long: Formamidopyrimidine-DNA glycosylase (272 aa).

Pro2 serves as the catalytic Schiff-base intermediate with DNA. Residue Glu3 is the Proton donor of the active site. Residue Lys57 is the Proton donor; for beta-elimination activity of the active site. Positions 90, 109, and 150 each coordinate DNA. An FPG-type zinc finger spans residues 235 to 269 (HVYGRAKKKCLLCSSIIQEEKIGQRNTFWCGHCQP). Arg259 serves as the catalytic Proton donor; for delta-elimination activity.

It belongs to the FPG family. In terms of assembly, monomer. The cofactor is Zn(2+).

The enzyme catalyses Hydrolysis of DNA containing ring-opened 7-methylguanine residues, releasing 2,6-diamino-4-hydroxy-5-(N-methyl)formamidopyrimidine.. It catalyses the reaction 2'-deoxyribonucleotide-(2'-deoxyribose 5'-phosphate)-2'-deoxyribonucleotide-DNA = a 3'-end 2'-deoxyribonucleotide-(2,3-dehydro-2,3-deoxyribose 5'-phosphate)-DNA + a 5'-end 5'-phospho-2'-deoxyribonucleoside-DNA + H(+). Its function is as follows. Involved in base excision repair of DNA damaged by oxidation or by mutagenic agents. Acts as a DNA glycosylase that recognizes and removes damaged bases. Has a preference for oxidized purines, such as 7,8-dihydro-8-oxoguanine (8-oxoG). Has AP (apurinic/apyrimidinic) lyase activity and introduces nicks in the DNA strand. Cleaves the DNA backbone by beta-delta elimination to generate a single-strand break at the site of the removed base with both 3'- and 5'-phosphates. The sequence is that of Formamidopyrimidine-DNA glycosylase from Aliivibrio fischeri (strain ATCC 700601 / ES114) (Vibrio fischeri).